The primary structure comprises 445 residues: UNC93-like protein MFSD11 (445 aa).

Residues L8–S28 traverse the membrane as a helical segment. N40 carries N-linked (GlcNAc...) asparagine glycosylation. Transmembrane regions (helical) follow at residues L52–V72, G74–I94, T98–A118, and I138–W158. N163 is a glycosylation site (N-linked (GlcNAc...) asparagine). The next 7 helical transmembrane spans lie at R170–I190, M239–V259, L277–G297, P309–M329, L343–L363, A385–Y405, and L415–G435.

This sequence belongs to the unc-93 family.

Its subcellular location is the membrane. This is UNC93-like protein MFSD11 (mfsd11) from Xenopus laevis (African clawed frog).